A 251-amino-acid chain; its full sequence is Insulin-induced gene 1 protein (251 aa).

Residues 1-58 (MQTLEEHCWSCSCTRGRDKKGTRLSTWLAQRAAKAMSSLNSLLSLAYHTLASSEGRSL) are Cytoplasmic-facing. A helical membrane pass occupies residues 59-81 (IRRSLVLFAVGVFLALVLNLLQI). The Extracellular portion of the chain corresponds to 82–100 (QRNVTLFPEEVIATIFSSA). A helical transmembrane segment spans residues 101–118 (WWVPPCCGTAAAVVGLLY). The Cytoplasmic segment spans residues 119-133 (PCIDSHLGEPHKFKR). Residues 134–156 (EWASVMRCIAVFVGINHASAKLD) traverse the membrane as a helical segment. Residues 157-159 (FAN) lie on the Extracellular side of the membrane. Residues 160–178 (NVQLSLTLAALSLGLWWTF) traverse the membrane as a helical segment. The Cytoplasmic segment spans residues 179–183 (DRSRS). The helical transmembrane segment at 184 to 205 (GLGLGITIAFLATLITQFLVYN) threads the bilayer. At 206 to 219 (GVYQYTSPDFLYIR) the chain is on the extracellular side. A helical transmembrane segment spans residues 220–237 (SWLPCIFFSGGVTVGNIG). At 238-251 (RQLAMGSSEKTHSD) the chain is on the cytoplasmic side. The KxHxx motif lies at 245–251 (SEKTHSD).

This sequence belongs to the INSIG family. Interacts with scap; interaction is direct and only takes place in the presence of sterols; it prevents interaction between scap and the coat protein complex II (COPII). Associates with the SCAP-SREBP complex; association is mediated via its interaction with scap and only takes place in the presence of sterols.

It is found in the endoplasmic reticulum membrane. Its function is as follows. Oxysterol-binding protein that mediates feedback control of cholesterol synthesis by controlling both endoplasmic reticulum to Golgi transport of scap and degradation of hmgcr. Acts as a negative regulator of cholesterol biosynthesis by mediating the retention of the SCAP-SREBP complex in the endoplasmic reticulum, thereby blocking the processing of sterol regulatory element-binding proteins (SREBPs). Binds oxysterol, including 25-hydroxycholesterol, regulating interaction with scap and retention of the SCAP-SREBP complex in the endoplasmic reticulum. In presence of oxysterol, interacts with scap, retaining the SCAP-SREBP complex in the endoplasmic reticulum, thereby preventing scap from escorting SREBPs to the Golgi. Sterol deprivation reduces oxysterol-binding, disrupting the interaction between insig1 and scap, thereby promoting Golgi transport of the SCAP-SREBP complex, followed by processing and nuclear translocation of SREBPs. Also regulates cholesterol synthesis by regulating degradation of hmgcr. This chain is Insulin-induced gene 1 protein, found in Xenopus tropicalis (Western clawed frog).